Reading from the N-terminus, the 221-residue chain is Cytidylate kinase 1 (221 aa).

An ATP-binding site is contributed by 7 to 15; the sequence is GPSASGKSS.

This sequence belongs to the cytidylate kinase family. Type 1 subfamily.

It is found in the cytoplasm. The catalysed reaction is CMP + ATP = CDP + ADP. It carries out the reaction dCMP + ATP = dCDP + ADP. The sequence is that of Cytidylate kinase 1 from Borreliella afzelii (strain PKo) (Borrelia afzelii).